Reading from the N-terminus, the 123-residue chain is Ribosome-binding factor A (123 aa).

This sequence belongs to the RbfA family. Monomer. Binds 30S ribosomal subunits, but not 50S ribosomal subunits or 70S ribosomes.

The protein resides in the cytoplasm. In terms of biological role, one of several proteins that assist in the late maturation steps of the functional core of the 30S ribosomal subunit. Associates with free 30S ribosomal subunits (but not with 30S subunits that are part of 70S ribosomes or polysomes). Required for efficient processing of 16S rRNA. May interact with the 5'-terminal helix region of 16S rRNA. The chain is Ribosome-binding factor A from Cupriavidus metallidurans (strain ATCC 43123 / DSM 2839 / NBRC 102507 / CH34) (Ralstonia metallidurans).